We begin with the raw amino-acid sequence, 123 residues long: Defensin beta 118 (123 aa).

The first 19 residues, 1–19, serve as a signal peptide directing secretion; the sequence is MKLLLLALPMLVLLPQVIP. 3 disulfide bridges follow: Cys27–Cys54, Cys34–Cys48, and Cys38–Cys55. Residues 65–123 constitute a propeptide that is removed on maturation; the sequence is VPTTSPTPLSDSTPGIIDDILTVRFTTDYFEVSSKKDMIEESEAGRGTETSLPNVHHSS. Over residues 100 to 110 the composition is skewed to basic and acidic residues; that stretch reads KDMIEESEAGR. Residues 100 to 123 are disordered; it reads KDMIEESEAGRGTETSLPNVHHSS. A compositionally biased stretch (polar residues) spans 112 to 123; it reads TETSLPNVHHSS.

Belongs to the beta-defensin family. The three-dimensional structure formed by the three intramolecular disulfide bridges is indispensable for antimicrobial activity.

The protein resides in the secreted. Its function is as follows. Host defense peptide that exhibits antimicrobial activity against both Gram-negative bacteria, such as E.coli and S.typhimurium, and Gram-positive bacteria, such as S.aureus and B.subtilis. Inhibits cell adhesion of E.coli on intestinal epithelial enterocytes. Causes rapid permeabilization of both the outer and inner membrane of E.coli, leading to morphological alterations on the bacterial surface. Binds to bacterial lipopolysaccharides (LPS) with high affinity, and may thereby be involved in immunoregulation through LPS neutralization. May contribute to epididymal innate immunity and protect the sperm against attack by microorganisms. The polypeptide is Defensin beta 118 (DEFB118) (Gorilla gorilla gorilla (Western lowland gorilla)).